Consider the following 291-residue polypeptide: Putative carboxymethylenebutenolidase (291 aa).

An N-terminal signal peptide occupies residues 1 to 40; it reads MTAFDADLRSLAAQTTLSRRTVIATSLATGFALAVQPVAA. Catalysis depends on residues Cys-170, Asp-227, and His-259.

Belongs to the dienelactone hydrolase family.

The enzyme catalyses 2-(5-oxo-2,5-dihydrofuran-2-ylidene)acetate + H2O = 4-oxohex-2-enedioate + H(+). The sequence is that of Putative carboxymethylenebutenolidase from Methylorubrum extorquens (strain ATCC 14718 / DSM 1338 / JCM 2805 / NCIMB 9133 / AM1) (Methylobacterium extorquens).